Here is a 255-residue protein sequence, read N- to C-terminus: tRNA (guanine-N(7)-)-methyltransferase (255 aa).

The interval 1 to 29 (MSDSDASRPSAIASDGPDAAGKHASGAPW) is disordered. 4 residues coordinate S-adenosyl-L-methionine: Glu-86, Glu-111, Asp-138, and Asp-160. Asp-160 is an active-site residue. Substrate-binding positions include Lys-164, Asp-196, and 233 to 236 (TRYE).

Belongs to the class I-like SAM-binding methyltransferase superfamily. TrmB family.

It catalyses the reaction guanosine(46) in tRNA + S-adenosyl-L-methionine = N(7)-methylguanosine(46) in tRNA + S-adenosyl-L-homocysteine. It participates in tRNA modification; N(7)-methylguanine-tRNA biosynthesis. In terms of biological role, catalyzes the formation of N(7)-methylguanine at position 46 (m7G46) in tRNA. The sequence is that of tRNA (guanine-N(7)-)-methyltransferase from Ruegeria sp. (strain TM1040) (Silicibacter sp.).